The chain runs to 302 residues: Riboflavin transporter (302 aa).

Transmembrane regions (helical) follow at residues 16 to 36 (AVVGALWMVLAGIAFSLLNVV), 44 to 64 (LAFPSASAAFWQYGFAFLFSL), 87 to 107 (VVLAALGVEAWVAGLAAVPIW), 109 to 129 (AIALVMTSPFFIILGARLFLG), 158 to 178 (IGWAALLPVLSALLWGASSLI), 191 to 213 (ITVWLLVLLTPINGGLALAAGFA), 227 to 247 (GLLTAVAQYFLTLAYAAADAA), and 264 to 284 (GWLFFGYAPAGYLWLGAALIL). EamA domains follow at residues 30–151 (FSLL…MIIL) and 170–291 (LLWG…LFIM).

Belongs to the drug/metabolite transporter (DMT) superfamily. 10 TMS drug/metabolite exporter (DME) (TC 2.A.7.3) family.

Its subcellular location is the cell membrane. Functionally, transports riboflavin into the cell. Can also transport FMN and FAD. Required for normal nodule development during colonization of pea plant roots. The protein is Riboflavin transporter of Rhizobium johnstonii (strain DSM 114642 / LMG 32736 / 3841) (Rhizobium leguminosarum bv. viciae).